A 163-amino-acid chain; its full sequence is Troponin C (163 aa).

Serine 1 is modified (N-acetylserine). EF-hand domains follow at residues 14–49 (EQIS…LGMS), 50–85 (ISRE…AMQD), 90–125 (IPDD…CAGD), and 127–162 (LTDD…LKVR). Lysine 20 carries the post-translational modification N6,N6-dimethyllysine; alternate. Position 20 is an N6-methyllysine; alternate (lysine 20). Ca(2+)-binding residues include aspartate 27, aspartate 29, aspartate 33, glutamate 38, aspartate 63, aspartate 65, serine 67, threonine 69, glutamate 74, aspartate 103, asparagine 105, aspartate 107, and glutamate 114.

This sequence belongs to the troponin C family.

In terms of biological role, troponin is the central regulatory protein of striated muscle contraction. Tn consists of three components: Tn-I which is the inhibitor of actomyosin ATPase, Tn-T which contains the binding site for tropomyosin and Tn-C. The binding of calcium to Tn-C abolishes the inhibitory action of Tn on actin filaments. The protein is Troponin C of Branchiostoma lanceolatum (Common lancelet).